The sequence spans 1243 residues: Plasma membrane calcium-transporting ATPase 2 (1243 aa).

Polar residues predominate over residues 1 to 13 (MGDMTNSDFYSKN). The segment at 1–24 (MGDMTNSDFYSKNQRNESSHGGEF) is disordered. Topologically, residues 1–94 (MGDMTNSDFY…NFIPPKKPKT (94 aa)) are cytoplasmic. Phosphoserine occurs at positions 18 and 27. Residues 95–115 (FLQLVWEALQDVTLIILEIAA) traverse the membrane as a helical segment. The Extracellular portion of the chain corresponds to 116 to 152 (IISLGLSFYHPPGESNEGCATAQGGAEDEGEAEAGWI). A helical membrane pass occupies residues 153–173 (EGAAILLSVICVVLVTAFNDW). Over 174-390 (SKEKQFRGLQ…KEKSVLQGKL (217 aa)) the chain is Cytoplasmic. Positions 296–308 (EEKKDKKGVKKGD) are enriched in basic and acidic residues. Positions 296–382 (EEKKDKKGVK…KKKANMHKKE (87 aa)) are disordered. Low complexity-rich tracts occupy residues 313-330 (PAAD…ANAS) and 337-356 (QDGS…GAAA). A helical transmembrane segment spans residues 391 to 410 (TKLAVQIGKAGLVMSAITVI). Over 411-443 (ILVLYFTVDTFVVNKKPWLTECTPVYVQYFVKF) the chain is Extracellular. The chain crosses the membrane as a helical span at residues 444–461 (FIIGVTVLVVAVPEGLPL). At 462 to 875 (AVTISLAYSV…MWGRNVYDSI (414 aa)) the chain is on the cytoplasmic side. Asp-499 functions as the 4-aspartylphosphate intermediate in the catalytic mechanism. The Mg(2+) site is built by Asp-820 and Asp-824. A helical membrane pass occupies residues 876-895 (SKFLQFQLTVNVVAVIVAFT). Residues 896–905 (GACITQDSPL) lie on the Extracellular side of the membrane. A helical transmembrane segment spans residues 906–926 (KAVQMLWVNLIMDTFASLALA). Residues 927–946 (TEPPTETLLLRKPYGRNKPL) are Cytoplasmic-facing. The helical transmembrane segment at 947-969 (ISRTMMKNILGHAVYQLTLIFTL) threads the bilayer. Residues 970 to 987 (LFVGEKMFQIDSGRNAPL) lie on the Extracellular side of the membrane. Residues 988–1009 (HSPPSEHYTIIFNTFVMMQLFN) form a helical membrane-spanning segment. The Cytoplasmic segment spans residues 1010-1028 (EINARKIHGERNVFDGIFR). A helical transmembrane segment spans residues 1029–1050 (NPIFCTIVLGTFAIQIVIVQFG). At 1051 to 1060 (GKPFSCSPLQ) the chain is on the extracellular side. The chain crosses the membrane as a helical span at residues 1061 to 1082 (LDQWMWCIFIGLGELVWGQVIA). The Cytoplasmic segment spans residues 1083-1243 (TIPTSRLKFL…SPIHSLETSL (161 aa)). 7 positions are modified to phosphoserine: Glu-1107, Ile-1116, Asp-1117, Arg-1121, Trp-1130, Phe-1131, and Gln-1138. The calmodulin-binding subdomain A stretch occupies residues 1123-1140 (LRRGQILWFRGLNRIQTQ). Phosphothreonine; by PKC is present on Thr-1139. Residues 1141–1150 (IRVVKAFRSS) form a calmodulin-binding subdomain B region. 8 positions are modified to phosphoserine: Val-1144, Phe-1147, Arg-1148, Tyr-1152, Arg-1161, Thr-1162, Ile-1175, and Ser-1178. Residue Thr-1188 is modified to Phosphothreonine. Residues 1194–1243 (AALKQNSSPPSSLNKNNSAIDSGINLTTDTSKSATSSSPGSPIHSLETSL) form a disordered region. 2 stretches are compositionally biased toward low complexity: residues 1196 to 1211 (LKQN…KNNS) and 1220 to 1234 (TTDT…SPGS). Ser-1201 is subject to Phosphoserine; by PKA. Ser-1211 carries the post-translational modification Phosphoserine.

It belongs to the cation transport ATPase (P-type) (TC 3.A.3) family. Type IIB subfamily. In terms of assembly, interacts with PDZD11. In terms of tissue distribution, isoforms containing segment B are found in brain, uterus, liver and kidney and in low levels in other tissues. Isoforms containing segment W are found in kidney, uterus, and pancreas. Isoforms containing segment Y are found in pancreas and in low levels in brain and heart. Isoforms containing segment Z are found in brain and heart and isoforms containing segment X are found in low levels in brain. Isoforms containing segment A are found in low levels in heart and small intestine while isoforms containing segment C are found in testis and in low levels in other tissues.

It localises to the cell membrane. It is found in the synapse. The protein localises to the apical cell membrane. The protein resides in the basolateral cell membrane. The enzyme catalyses Ca(2+)(in) + ATP + H2O = Ca(2+)(out) + ADP + phosphate + H(+). In terms of biological role, ATP-driven Ca(2+) ion pump involved in the maintenance of basal intracellular Ca(2+) levels in specialized cells of cerebellar circuit and vestibular and cochlear systems. Uses ATP as an energy source to transport cytosolic Ca(2+) ions across the plasma membrane to the extracellular compartment. Has fast activation and Ca(2+) clearance rate suited to control fast neuronal Ca(2+) dynamics. At parallel fiber to Purkinje neuron synapse, mediates presynaptic Ca(2+) efflux in response to climbing fiber-induced Ca(2+) rise. Provides for fast return of Ca(2+) concentrations back to their resting levels, ultimately contributing to long-term depression induction and motor learning. Plays an essential role in hearing and balance. In cochlear hair cells, shuttles Ca(2+) ions from stereocilia to the endolymph and dissipates Ca(2+) transients generated by the opening of the mechanoelectrical transduction channels. Regulates Ca(2+) levels in the vestibular system, where it contributes to the formation of otoconia. In non-excitable cells, regulates Ca(2+) signaling through spatial control of Ca(2+) ions extrusion and dissipation of Ca(2+) transients generated by store-operated channels. In lactating mammary gland, allows for the high content of Ca(2+) ions in the milk. This is Plasma membrane calcium-transporting ATPase 2 (Atp2b2) from Rattus norvegicus (Rat).